The primary structure comprises 204 residues: Inactive ribonuclease-like protein 9 (204 aa).

An N-terminal signal peptide occupies residues 1–26 (MMRTLITTHPLLLLLLLQQLLQPVQF). 3 disulfide bridges follow: C97-C152, C115-C167, and C122-C129. Residues N130 and N142 are each glycosylated (N-linked (GlcNAc...) asparagine).

This sequence belongs to the pancreatic ribonuclease family.

The protein localises to the secreted. Its function is as follows. Does not exhibit any ribonuclease activity. The polypeptide is Inactive ribonuclease-like protein 9 (RNASE9) (Macaca mulatta (Rhesus macaque)).